A 488-amino-acid polypeptide reads, in one-letter code: Splicing factor U2AF 65 kDa subunit (488 aa).

2 stretches are compositionally biased toward basic and acidic residues: residues 25-55 (LESL…DEDR) and 78-129 (DRRD…KYRF). The tract at residues 25-133 (LESLQEDVKP…PKKYRFWDVP (109 aa)) is disordered. 3 RRM domains span residues 175–257 (RRLY…RPRD), 282–359 (NKIF…LACA), and 389–479 (EILC…YYDV).

The protein belongs to the splicing factor SR family. Forms a heterodimer with the U2AF small subunit.

Its subcellular location is the nucleus. Its function is as follows. Necessary for the splicing of pre-mRNA. Binds to the polypyrimidine tract of introns early during spliceosome assembly. The protein is Splicing factor U2AF 65 kDa subunit (uaf-1) of Caenorhabditis briggsae.